The chain runs to 427 residues: 3-phosphoshikimate 1-carboxyvinyltransferase (427 aa).

3-phosphoshikimate-binding residues include Lys20, Ser21, and Arg25. Lys20 provides a ligand contact to phosphoenolpyruvate. Positions 92 and 120 each coordinate phosphoenolpyruvate. 3-phosphoshikimate is bound by residues Ser166, Gln168, Asp312, and Lys339. Gln168 is a binding site for phosphoenolpyruvate. Asp312 serves as the catalytic Proton acceptor. Phosphoenolpyruvate-binding residues include Arg343 and Arg385.

Belongs to the EPSP synthase family. As to quaternary structure, monomer.

The protein localises to the cytoplasm. The enzyme catalyses 3-phosphoshikimate + phosphoenolpyruvate = 5-O-(1-carboxyvinyl)-3-phosphoshikimate + phosphate. It participates in metabolic intermediate biosynthesis; chorismate biosynthesis; chorismate from D-erythrose 4-phosphate and phosphoenolpyruvate: step 6/7. Its function is as follows. Catalyzes the transfer of the enolpyruvyl moiety of phosphoenolpyruvate (PEP) to the 5-hydroxyl of shikimate-3-phosphate (S3P) to produce enolpyruvyl shikimate-3-phosphate and inorganic phosphate. This chain is 3-phosphoshikimate 1-carboxyvinyltransferase, found in Streptococcus agalactiae serotype III (strain NEM316).